A 61-amino-acid chain; its full sequence is Small ribosomal subunit protein uS14 (61 aa).

Residues cysteine 24, cysteine 27, cysteine 40, and cysteine 43 each contribute to the Zn(2+) site.

The protein belongs to the universal ribosomal protein uS14 family. Zinc-binding uS14 subfamily. In terms of assembly, part of the 30S ribosomal subunit. Contacts proteins S3 and S10. It depends on Zn(2+) as a cofactor.

In terms of biological role, binds 16S rRNA, required for the assembly of 30S particles and may also be responsible for determining the conformation of the 16S rRNA at the A site. This chain is Small ribosomal subunit protein uS14, found in Dehalococcoides mccartyi (strain ATCC BAA-2266 / KCTC 15142 / 195) (Dehalococcoides ethenogenes (strain 195)).